We begin with the raw amino-acid sequence, 320 residues long: Cytochrome f (320 aa).

Positions 1–35 are cleaved as a signal peptide; that stretch reads MQTRNTLSWIREEITRSISVSLMIYIITWASISSA. Tyr36, Cys56, Cys59, and His60 together coordinate heme. The chain crosses the membrane as a helical span at residues 286–306; the sequence is VQGLLFFLGSVVLAQIFLVLK.

Belongs to the cytochrome f family. As to quaternary structure, the 4 large subunits of the cytochrome b6-f complex are cytochrome b6, subunit IV (17 kDa polypeptide, petD), cytochrome f and the Rieske protein, while the 4 small subunits are PetG, PetL, PetM and PetN. The complex functions as a dimer. Requires heme as cofactor.

The protein localises to the plastid. It is found in the chloroplast thylakoid membrane. Component of the cytochrome b6-f complex, which mediates electron transfer between photosystem II (PSII) and photosystem I (PSI), cyclic electron flow around PSI, and state transitions. The polypeptide is Cytochrome f (Olimarabidopsis pumila (Dwarf rocket)).